The primary structure comprises 123 residues: MSIDEILEAVEGLTVLELNELVEKAEEKFGVSAAAPVAVAGGAPAAGGAAAEEKSEFDVILASAGEAKMKVIKAVKDLTGLGLKDAKALVDEAPKAIKEGASKEEAEELKAKLEEVGATIELK.

Belongs to the bacterial ribosomal protein bL12 family. In terms of assembly, homodimer. Part of the ribosomal stalk of the 50S ribosomal subunit. Forms a multimeric L10(L12)X complex, where L10 forms an elongated spine to which 2 to 4 L12 dimers bind in a sequential fashion. Binds GTP-bound translation factors.

Forms part of the ribosomal stalk which helps the ribosome interact with GTP-bound translation factors. Is thus essential for accurate translation. The protein is Large ribosomal subunit protein bL12 of Finegoldia magna (strain ATCC 29328 / DSM 20472 / WAL 2508) (Peptostreptococcus magnus).